The chain runs to 398 residues: ATP-dependent RNA helicase eIF4A (398 aa).

The Q motif motif lies at 25-53 (DSFDTMNLKPELLRGVYAYGFERPSAIQQ). The 171-residue stretch at 56–226 (IMPVIKGHDV…TKFMRDPVRI (171 aa)) folds into the Helicase ATP-binding domain. 69–76 (AQSGTGKT) contributes to the ATP binding site. The short motif at 174 to 177 (DEAD) is the DEAD box element. The Helicase C-terminal domain maps to 237-398 (GIKQFYIAVE…EMPMNVADLI (162 aa)).

This sequence belongs to the DEAD box helicase family. eIF4A subfamily. As to quaternary structure, component of the eIF4F complex, which composition varies with external and internal environmental conditions. It is composed of at least eIF4A, eIF4E and eIF4G.

The protein localises to the cytoplasm. It carries out the reaction ATP + H2O = ADP + phosphate + H(+). ATP-dependent RNA helicase which is a subunit of the eIF4F complex involved in cap recognition and is required for mRNA binding to ribosome. In the current model of translation initiation, eIF4A unwinds RNA secondary structures in the 5'-UTR of mRNAs which is necessary to allow efficient binding of the small ribosomal subunit, and subsequent scanning for the initiator codon. The chain is ATP-dependent RNA helicase eIF4A (tif1) from Sclerotinia sclerotiorum (strain ATCC 18683 / 1980 / Ss-1) (White mold).